The sequence spans 269 residues: Regulating synaptic membrane exocytosis protein 4 (269 aa).

Residues 115-233 (PMGGVEIGLQ…DLTTLAVGWY (119 aa)) form the C2 domain. Serine 254 and serine 257 each carry phosphoserine.

As to quaternary structure, binds PPFIA3. As to expression, brain specific.

It localises to the synapse. In terms of biological role, regulates synaptic membrane exocytosis. The polypeptide is Regulating synaptic membrane exocytosis protein 4 (Rims4) (Rattus norvegicus (Rat)).